The chain runs to 506 residues: ATP synthase subunit alpha (506 aa).

171 to 178 (GDRQTGKT) lines the ATP pocket.

Belongs to the ATPase alpha/beta chains family. In terms of assembly, F-type ATPases have 2 components, CF(1) - the catalytic core - and CF(0) - the membrane proton channel. CF(1) has five subunits: alpha(3), beta(3), gamma(1), delta(1), epsilon(1). CF(0) has four main subunits: a(1), b(1), b'(1) and c(9-12).

The protein resides in the cellular thylakoid membrane. It catalyses the reaction ATP + H2O + 4 H(+)(in) = ADP + phosphate + 5 H(+)(out). Produces ATP from ADP in the presence of a proton gradient across the membrane. The alpha chain is a regulatory subunit. This is ATP synthase subunit alpha from Nostoc sp. (strain PCC 7120 / SAG 25.82 / UTEX 2576).